Here is a 63-residue protein sequence, read N- to C-terminus: Large ribosomal subunit protein bL35 (63 aa).

It belongs to the bacterial ribosomal protein bL35 family.

The chain is Large ribosomal subunit protein bL35 from Sulfurimonas denitrificans (strain ATCC 33889 / DSM 1251) (Thiomicrospira denitrificans (strain ATCC 33889 / DSM 1251)).